Here is an 887-residue protein sequence, read N- to C-terminus: Bifunctional uridylyltransferase/uridylyl-removing enzyme (887 aa).

Residues Met1–Glu337 are uridylyltransferase. Residues Val339–Val699 form a uridylyl-removing region. One can recognise an HD domain in the interval Val457 to Leu579. 2 ACT domains span residues Gln700–Arg782 and Met809–His887.

The protein belongs to the GlnD family. Mg(2+) is required as a cofactor.

It carries out the reaction [protein-PII]-L-tyrosine + UTP = [protein-PII]-uridylyl-L-tyrosine + diphosphate. The catalysed reaction is [protein-PII]-uridylyl-L-tyrosine + H2O = [protein-PII]-L-tyrosine + UMP + H(+). With respect to regulation, uridylyltransferase (UTase) activity is inhibited by glutamine, while glutamine activates uridylyl-removing (UR) activity. Modifies, by uridylylation and deuridylylation, the PII regulatory proteins (GlnB and homologs), in response to the nitrogen status of the cell that GlnD senses through the glutamine level. Under low glutamine levels, catalyzes the conversion of the PII proteins and UTP to PII-UMP and PPi, while under higher glutamine levels, GlnD hydrolyzes PII-UMP to PII and UMP (deuridylylation). Thus, controls uridylylation state and activity of the PII proteins, and plays an important role in the regulation of nitrogen assimilation and metabolism. This chain is Bifunctional uridylyltransferase/uridylyl-removing enzyme, found in Acinetobacter baumannii (strain ACICU).